The chain runs to 140 residues: Small ribosomal subunit protein uS12 (140 aa).

Residues 33–55 (KEQTNVSSPQKRGVCTRVGTMTP) are disordered.

This sequence belongs to the universal ribosomal protein uS12 family. In terms of assembly, part of the 30S ribosomal subunit. Contacts proteins S8 and S17. May interact with IF1 in the 30S initiation complex.

In terms of biological role, with S4 and S5 plays an important role in translational accuracy. Functionally, interacts with and stabilizes bases of the 16S rRNA that are involved in tRNA selection in the A site and with the mRNA backbone. Located at the interface of the 30S and 50S subunits, it traverses the body of the 30S subunit contacting proteins on the other side and probably holding the rRNA structure together. The combined cluster of proteins S8, S12 and S17 appears to hold together the shoulder and platform of the 30S subunit. The protein is Small ribosomal subunit protein uS12 of Geobacillus kaustophilus (strain HTA426).